The sequence spans 421 residues: UDP-N-acetylglucosamine 1-carboxyvinyltransferase (421 aa).

22 to 23 contributes to the phosphoenolpyruvate binding site; it reads KN. Position 93 (R93) interacts with UDP-N-acetyl-alpha-D-glucosamine. The active-site Proton donor is C117. C117 bears the 2-(S-cysteinyl)pyruvic acid O-phosphothioketal mark. UDP-N-acetyl-alpha-D-glucosamine is bound by residues 122-126, D308, and I330; that span reads RPVDL.

It belongs to the EPSP synthase family. MurA subfamily.

Its subcellular location is the cytoplasm. It carries out the reaction phosphoenolpyruvate + UDP-N-acetyl-alpha-D-glucosamine = UDP-N-acetyl-3-O-(1-carboxyvinyl)-alpha-D-glucosamine + phosphate. The protein operates within cell wall biogenesis; peptidoglycan biosynthesis. Its function is as follows. Cell wall formation. Adds enolpyruvyl to UDP-N-acetylglucosamine. The chain is UDP-N-acetylglucosamine 1-carboxyvinyltransferase from Pseudomonas savastanoi pv. phaseolicola (strain 1448A / Race 6) (Pseudomonas syringae pv. phaseolicola (strain 1448A / Race 6)).